The chain runs to 117 residues: UPF0342 protein LGAS_1451 (117 aa).

Belongs to the UPF0342 family.

This Lactobacillus gasseri (strain ATCC 33323 / DSM 20243 / BCRC 14619 / CIP 102991 / JCM 1131 / KCTC 3163 / NCIMB 11718 / NCTC 13722 / AM63) protein is UPF0342 protein LGAS_1451.